We begin with the raw amino-acid sequence, 67 residues long: Large ribosomal subunit protein bL32 (67 aa).

Positions M1–Q19 are enriched in basic residues. Residues M1–A22 are disordered.

It belongs to the bacterial ribosomal protein bL32 family.

The sequence is that of Large ribosomal subunit protein bL32 from Kocuria rhizophila (strain ATCC 9341 / DSM 348 / NBRC 103217 / DC2201).